A 99-amino-acid chain; its full sequence is MRIGVVGDPDVVVGFRLAGLTDVYEVKSPEQAAKAIEELNNNSEIGLIITTERIGEQIRDSISGVKKIVVEVPDKNGPIVRENDPVKVLVRNAVGVDIK.

Belongs to the V-ATPase F subunit family. In terms of assembly, has multiple subunits with at least A(3), B(3), C, D, E, F, H, I and proteolipid K(x).

Its subcellular location is the cell membrane. Component of the A-type ATP synthase that produces ATP from ADP in the presence of a proton gradient across the membrane. In Methanococcus maripaludis (strain C6 / ATCC BAA-1332), this protein is A-type ATP synthase subunit F.